The chain runs to 292 residues: 4-diphosphocytidyl-2-C-methyl-D-erythritol kinase (292 aa).

Lys-10 is an active-site residue. 100–110 is a binding site for ATP; the sequence is PIGSGLGGGSS. The active site involves Asp-142.

This sequence belongs to the GHMP kinase family. IspE subfamily. In terms of assembly, homodimer.

The catalysed reaction is 4-CDP-2-C-methyl-D-erythritol + ATP = 4-CDP-2-C-methyl-D-erythritol 2-phosphate + ADP + H(+). The protein operates within isoprenoid biosynthesis; isopentenyl diphosphate biosynthesis via DXP pathway; isopentenyl diphosphate from 1-deoxy-D-xylulose 5-phosphate: step 3/6. Its function is as follows. Catalyzes the phosphorylation of the position 2 hydroxy group of 4-diphosphocytidyl-2C-methyl-D-erythritol. The chain is 4-diphosphocytidyl-2-C-methyl-D-erythritol kinase from Buchnera aphidicola subsp. Schizaphis graminum (strain Sg).